The following is a 617-amino-acid chain: Glutamine--fructose-6-phosphate aminotransferase [isomerizing] (617 aa).

The Nucleophile; for GATase activity role is filled by Cys-2. A Glutamine amidotransferase type-2 domain is found at 2-222; the sequence is CGIIGLAFAE…DGEFGWISPE (221 aa). 2 SIS domains span residues 293 to 432 and 466 to 607; these read AAGL…EAGR and AASL…PDKP. The For Fru-6P isomerization activity role is filled by Lys-612.

As to quaternary structure, homodimer.

It localises to the cytoplasm. It carries out the reaction D-fructose 6-phosphate + L-glutamine = D-glucosamine 6-phosphate + L-glutamate. In terms of biological role, catalyzes the first step in hexosamine metabolism, converting fructose-6P into glucosamine-6P using glutamine as a nitrogen source. In Aeropyrum pernix (strain ATCC 700893 / DSM 11879 / JCM 9820 / NBRC 100138 / K1), this protein is Glutamine--fructose-6-phosphate aminotransferase [isomerizing].